Reading from the N-terminus, the 252-residue chain is Transcriptional regulatory protein HptR (252 aa).

Positions Lys-3–Val-118 constitute a Response regulatory domain. Asp-55 is modified (4-aspartylphosphate). Positions Asn-153–Gln-250 constitute an HTH araC/xylS-type domain. 2 DNA-binding regions (H-T-H motif) span residues Ser-170–Val-191 and His-217–Leu-240.

Phosphorylated by HptS.

The protein localises to the cytoplasm. In terms of biological role, member of the two-component regulatory system HptS/HptR that regulates genes involved in hexose phosphate transport system in response to changes in extracellular phosphate sources. Activates uhpT expression to facilitate glucose-6-phosphate/G6P utilization by directly binding to its promoter. Antagonizes CcpA-dependent transcription of a subset of CcpA-regulated genes involved in antibiotic susceptibility. In Staphylococcus aureus (strain MRSA252), this protein is Transcriptional regulatory protein HptR (hptR).